The primary structure comprises 464 residues: MNRSPSSSGLLPLPGAPSSSWALYRARLSSLLQSVDTAVFIAFWLFGLINNVLYVIILSAAQDLVGNGIPKGVVLLADVMPSFLTKLVAPYFIHRIPYATRIFIFVTLSSAGMLLIAFTPPSRSVAVKLIGVVLSSISSGGGELSFLGLTHYYGHMSLAAWGSGTGGAGLIGSLLYVMLTDWIGLSVKTSLLASAFLPIIMLVSFFLILPHGPLRASARKTYEPIANRDSFQEESEGAENNFDDIPTSTASSSLLAPGPAVAATAYSSHPTEDARKDSLAAKIQRSKSLFFPYMLPLLLVYIAEYTINQGVSPTLLFPLESSPFAEFRSFYPFYGFLYQVGVFISRSSIAFIRIHHLYLPSLLQVANLVLLTLHALLNFIPSVYIVFVIIFWEGLLGGCVYVNTFAEIMEHVPAEDREFSLGATSVSDSGGICVASFLSMAMEIWLCNWQVDHGRDWCRRIKAG.

The N-terminal stretch at 1–22 is a signal peptide; the sequence is MNRSPSSSGLLPLPGAPSSSWA. 10 helical membrane-spanning segments follow: residues 38-58, 73-93, 102-122, 129-149, 167-187, 190-210, 288-308, 332-352, 354-374, and 376-396; these read AVFIAFWLFGLINNVLYVIIL, VVLLADVMPSFLTKLVAPYFI, IFIFVTLSSAGMLLIAFTPPS, LIGVVLSSISSGGGELSFLGL, GAGLIGSLLYVMLTDWIGLSV, SLLASAFLPIIMLVSFFLILP, SLFFPYMLPLLLVYIAEYTIN, PFYGFLYQVGVFISRSSIAFI, IHHLYLPSLLQVANLVLLTLH, and LLNFIPSVYIVFVIIFWEGLL.

It belongs to the battenin family.

It is found in the vacuole membrane. Functionally, involved in vacuolar transport and vacuole pH homeostasis. Also required for cytokinesis. The protein is Protein btn-1 (cln3) of Neurospora crassa (strain ATCC 24698 / 74-OR23-1A / CBS 708.71 / DSM 1257 / FGSC 987).